We begin with the raw amino-acid sequence, 206 residues long: Glutathione S-transferase 1 (206 aa).

The GST N-terminal domain occupies 2-79 (PQYKLTYFDI…YLGRQFGLAG (78 aa)). Glutathione contacts are provided by residues Y8, W39, K43, 49 to 51 (GQL), and 63 to 64 (QS). A GST C-terminal domain is found at 81–206 (TPMEEAQVDS…WIAERPKTPY (126 aa)).

It belongs to the GST superfamily. Sigma family.

It catalyses the reaction RX + glutathione = an S-substituted glutathione + a halide anion + H(+). Its function is as follows. Conjugation of reduced glutathione to a wide number of exogenous and endogenous hydrophobic electrophiles. Can also function as a GSH peroxidase. This Ascaris suum (Pig roundworm) protein is Glutathione S-transferase 1 (GST1).